Reading from the N-terminus, the 63-residue chain is Large ribosomal subunit protein bL28 (63 aa).

This sequence belongs to the bacterial ribosomal protein bL28 family.

The protein is Large ribosomal subunit protein bL28 of Hydrogenobaculum sp. (strain Y04AAS1).